The chain runs to 212 residues: 3,4-dihydroxy-2-butanone 4-phosphate synthase (212 aa).

D-ribulose 5-phosphate is bound by residues 37–38 (RE), D42, 150–154 (RRGHT), and E174. E38 is a Mg(2+) binding site. H153 is a Mg(2+) binding site.

This sequence belongs to the DHBP synthase family. As to quaternary structure, homodimer. Mg(2+) serves as cofactor. It depends on Mn(2+) as a cofactor.

The catalysed reaction is D-ribulose 5-phosphate = (2S)-2-hydroxy-3-oxobutyl phosphate + formate + H(+). It participates in cofactor biosynthesis; riboflavin biosynthesis; 2-hydroxy-3-oxobutyl phosphate from D-ribulose 5-phosphate: step 1/1. Its function is as follows. Catalyzes the conversion of D-ribulose 5-phosphate to formate and 3,4-dihydroxy-2-butanone 4-phosphate. This Shewanella halifaxensis (strain HAW-EB4) protein is 3,4-dihydroxy-2-butanone 4-phosphate synthase.